The sequence spans 80 residues: Small pacifastin protease inhibitor (80 aa).

An N-terminal signal peptide occupies residues 1 to 24 (MSKVLKVGLLLLLVAVAASAYAVA). A propeptide spanning residues 25 to 47 (EENGAPKENKQLPQIDDYGVTNK) is cleaved from the precursor. A Pacifastin domain is found at 45–80 (TNKCPANQPFKWNCNYCTCGPEGKDASCTRMACPQH). Intrachain disulfides connect Cys-48–Cys-63, Cys-58–Cys-77, and Cys-61–Cys-72.

Belongs to the protease inhibitor I19 family. As to expression, expressed in the venom apparatus. Low transcript levels are also detected in other tissues.

The protein resides in the secreted. Functionally, parasitic wasp protein that may interfere with the host immune response. The recombinant protein inhibits trypsin activity and prophenoloxidase (PPO) activation, an enzyme essential for both clotting and insect innate immune responses. It does not inhibit activity of chymotrypsin and protease K, and has no effect on phenoloxidase (PO) activity. This is Small pacifastin protease inhibitor from Nasonia vitripennis (Parasitic wasp).